We begin with the raw amino-acid sequence, 236 residues long: Proteasome subunit alpha (236 aa).

The protein belongs to the peptidase T1A family. The 20S proteasome core is composed of 14 alpha and 14 beta subunits that assemble into four stacked heptameric rings, resulting in a barrel-shaped structure. The two inner rings, each composed of seven catalytic beta subunits, are sandwiched by two outer rings, each composed of seven alpha subunits. The catalytic chamber with the active sites is on the inside of the barrel. Has a gated structure, the ends of the cylinder being occluded by the N-termini of the alpha-subunits. Is capped by the proteasome-associated ATPase, ARC.

It is found in the cytoplasm. The protein operates within protein degradation; proteasomal Pup-dependent pathway. The formation of the proteasomal ATPase ARC-20S proteasome complex, likely via the docking of the C-termini of ARC into the intersubunit pockets in the alpha-rings, may trigger opening of the gate for substrate entry. Interconversion between the open-gate and close-gate conformations leads to a dynamic regulation of the 20S proteasome proteolysis activity. In terms of biological role, component of the proteasome core, a large protease complex with broad specificity involved in protein degradation. This is Proteasome subunit alpha from Jonesia denitrificans (strain ATCC 14870 / DSM 20603 / BCRC 15368 / CIP 55.134 / JCM 11481 / NBRC 15587 / NCTC 10816 / Prevot 55134) (Listeria denitrificans).